A 100-amino-acid polypeptide reads, in one-letter code: Large ribosomal subunit protein bL27 (100 aa).

The propeptide occupies Met1–Phe9.

This sequence belongs to the bacterial ribosomal protein bL27 family. In terms of processing, the N-terminus is cleaved by ribosomal processing cysteine protease Prp.

The protein is Large ribosomal subunit protein bL27 of Clostridium botulinum (strain Hall / ATCC 3502 / NCTC 13319 / Type A).